The following is a 437-amino-acid chain: Indole diterpene prenyltransferase anaPT (437 aa).

The disordered stretch occupies residues 1-28 (MSPLSMQTDSVQGTAENKSLETNGTSND). L-tryptophan-binding positions include 102–103 (GF) and Glu-111. Dimethylallyl diphosphate-binding residues include Arg-124, Lys-208, Tyr-210, Tyr-282, Gln-355, Tyr-357, Tyr-422, and Tyr-426.

The protein belongs to the tryptophan dimethylallyltransferase family.

The enzyme catalyses (R)-benzodiazepinedione + dimethylallyl diphosphate = (2R,3S,11R)-aszonalenin + diphosphate. It carries out the reaction (S)-benzodiazepinedione + dimethylallyl diphosphate = (2R,3S,11S)-aszonalenin + diphosphate. Its pathway is alkaloid biosynthesis. In terms of biological role, indole diterpene prenyltransferase; part of the gene cluster that mediates the biosynthesis of the prenylated pyrroloindoline diketopiperazine acetylaszonalenin. The first step in the pathway is the formation of (R)-benzodiazepinedione by condensation of tryptophan and anthranilic acid catalyzed by the non-ribosomal peptide synthetase anaPS. The prenyltransferase anaPT then converts (R)-benzodiazepinedione to aszonalenin in the presence of dimethylallyl diphosphate (DMAPP) via C3-prenylation. The last step in the biosynthesis of acetylaszonalenin via acetylation of aszonalenin at position N1 catalyzed by anaAT. The chain is Indole diterpene prenyltransferase anaPT from Neosartorya fischeri (strain ATCC 1020 / DSM 3700 / CBS 544.65 / FGSC A1164 / JCM 1740 / NRRL 181 / WB 181) (Aspergillus fischerianus).